A 523-amino-acid chain; its full sequence is MRVYQFCRPFQLFTYFLCYLLVFVKANKEKISQKNYQVCAGMYSKEDWKGKIDPFISFNLKKISGLSDESDPGLVVAIYDFQDFEHLGVQLPDEEMYYICDDYAIDIGICEEENRDEFIVQDVVYDPYTSTNRSLANPIMTFSQNEVGLHDTRYPIKETGFYCVTAFRSSTSTKFNAVVNFRNAYGQLAGTEINKLPLYGLLAVAYVVAMALYSFAFWKHKHELLPLQKYLLAFFVFLTAETIFVWAYYDLKNEKGDTAGIKVYMVFLSILTAGKVTFSFFLLLIIALGYGIVYPKLNKTLMRRCQMYGALTYAICIGFLIQSYLTDMEAPSPLILITLIPMALALIIFYYMIIRSMTKTVIYLKEQRQIVKLNMYKKLLYIIYASFLSVLAGSIVSSFIYVGMNTIDMIEKNWRSRFFVTDFWPTLVYFIVFVTIAFLWRPTDTSYMLAASQQLPTDPENVADFDLGDLQSFDDQDDASIITGERGIDEDDLNLNFTDDEEGHDNVNNHSQGHGPVSPSPTK.

The signal sequence occupies residues 1–26 (MRVYQFCRPFQLFTYFLCYLLVFVKA). Residues 27–197 (NKEKISQKNY…LAGTEINKLP (171 aa)) are Lumenal-facing. The N-linked (GlcNAc...) asparagine glycan is linked to N132. Residues 198–218 (LYGLLAVAYVVAMALYSFAFW) traverse the membrane as a helical segment. The Cytoplasmic segment spans residues 219–230 (KHKHELLPLQKY). The chain crosses the membrane as a helical span at residues 231 to 251 (LLAFFVFLTAETIFVWAYYDL). The Lumenal portion of the chain corresponds to 252-265 (KNEKGDTAGIKVYM). A helical transmembrane segment spans residues 266–286 (VFLSILTAGKVTFSFFLLLII). At 287 to 304 (ALGYGIVYPKLNKTLMRR) the chain is on the cytoplasmic side. A helical membrane pass occupies residues 305–325 (CQMYGALTYAICIGFLIQSYL). Over 326-333 (TDMEAPSP) the chain is Lumenal. The helical transmembrane segment at 334 to 354 (LILITLIPMALALIIFYYMII) threads the bilayer. Residues 355-381 (RSMTKTVIYLKEQRQIVKLNMYKKLLY) are Cytoplasmic-facing. The helical transmembrane segment at 382–402 (IIYASFLSVLAGSIVSSFIYV) threads the bilayer. The Lumenal segment spans residues 403-417 (GMNTIDMIEKNWRSR). A helical transmembrane segment spans residues 418-438 (FFVTDFWPTLVYFIVFVTIAF). Topologically, residues 439-523 (LWRPTDTSYM…HGPVSPSPTK (85 aa)) are cytoplasmic. Position 480 is a phosphoserine (S480). Phosphothreonine is present on residues T483 and T498. Residues 483-523 (TGERGIDEDDLNLNFTDDEEGHDNVNNHSQGHGPVSPSPTK) form a disordered region. Positions 488-503 (IDEDDLNLNFTDDEEG) are enriched in acidic residues.

The protein belongs to the LU7TM family.

The protein resides in the golgi apparatus membrane. Its subcellular location is the early endosome membrane. This Saccharomyces cerevisiae (strain YJM789) (Baker's yeast) protein is Membrane protein PTM1 (PTM1).